Here is a 389-residue protein sequence, read N- to C-terminus: Leucine aminopeptidase 1 (389 aa).

The signal sequence occupies residues 1 to 18; the sequence is MKSSVLLSLCTAALVAGA. Positions 19–89 are excised as a propeptide; sequence AHPLEPQVVL…INANRLIEKS (71 aa). N-linked (GlcNAc...) asparagine glycans are attached at residues asparagine 99, asparagine 156, and asparagine 180. Residues histidine 188, aspartate 207, glutamate 246, and aspartate 273 each coordinate Zn(2+). A disulfide bridge connects residues cysteine 322 and cysteine 326. Histidine 355 contacts Zn(2+).

Belongs to the peptidase M28 family. M28E subfamily. In terms of assembly, monomer. Zn(2+) serves as cofactor.

It localises to the secreted. Extracellular aminopeptidase that allows assimilation of proteinaceous substrates. This is Leucine aminopeptidase 1 (LAP1) from Phaeosphaeria nodorum (strain SN15 / ATCC MYA-4574 / FGSC 10173) (Glume blotch fungus).